Consider the following 999-residue polypeptide: Tyrosine-protein kinase Mer (999 aa).

The first 20 residues, 1 to 20 (MGPAPLPLLLGLFLPALWRR), serve as a signal peptide directing secretion. The Extracellular portion of the chain corresponds to 21–505 (AITEAREEAK…PGNADPVLII (485 aa)). Ig-like C2-type domains are found at residues 81–186 (PQVT…EIVS) and 197–273 (PHFT…LTVS). N-linked (GlcNAc...) asparagine glycosylation is found at N114, N170, N207, N215, N234, N294, N316, N329, N336, N354, N389, N395, N442, and N454. Cysteines 115 and 175 form a disulfide. Residues C218 and C262 are joined by a disulfide bond. Fibronectin type-III domains are found at residues 286–381 (PPTE…TTEG) and 386–484 (APLN…PAHG). A helical membrane pass occupies residues 506–526 (FGCFCGFILIGLILYISLAIR). At 527 to 999 (KRVQETKFGN…DSSEGSEVLM (473 aa)) the chain is on the cytoplasmic side. Residue S543 is modified to Phosphoserine. The region spanning 587–858 (LILGKILGEG…VLRLQLEKLL (272 aa)) is the Protein kinase domain. Residues 593–601 (LGEGEFGSV) and K615 each bind ATP. Residue D723 is the Proton acceptor of the active site. A phosphotyrosine; by autocatalysis mark is found at Y749, Y753, Y754, and Y872. Position 935 is a phosphoserine (S935).

It belongs to the protein kinase superfamily. Tyr protein kinase family. AXL/UFO subfamily. As to quaternary structure, interacts (upon activation) with TNK2; stimulates TNK2 autophosphorylation. Interacts (via N-terminus) with extracellular ligands LGALS3, TUB, TULP1 and GAS6. Interacts with VAV1 in a phosphotyrosine-independent manner. Interacts with TIMD4; this interaction enhances TIMD4-mediated efferocytosis. Post-translationally, autophosphorylated on Tyr-749, Tyr-753 and Tyr-754 in the activation loop allowing full activity. Autophosphorylated on Tyr-872 leading to recruitment of downstream partners of the signaling cascade such as PLCG2. As to expression, not expressed in normal B- and T-lymphocytes but is expressed in numerous neoplastic B- and T-cell lines. Highly expressed in testis, ovary, prostate, lung, and kidney, with lower expression in spleen, small intestine, colon, and liver.

It is found in the cell membrane. It carries out the reaction L-tyrosyl-[protein] + ATP = O-phospho-L-tyrosyl-[protein] + ADP + H(+). Its function is as follows. Receptor tyrosine kinase that transduces signals from the extracellular matrix into the cytoplasm by binding to several ligands including LGALS3, TUB, TULP1 or GAS6. Regulates many physiological processes including cell survival, migration, differentiation, and phagocytosis of apoptotic cells (efferocytosis). Ligand binding at the cell surface induces autophosphorylation of MERTK on its intracellular domain that provides docking sites for downstream signaling molecules. Following activation by ligand, interacts with GRB2 or PLCG2 and induces phosphorylation of MAPK1, MAPK2, FAK/PTK2 or RAC1. MERTK signaling plays a role in various processes such as macrophage clearance of apoptotic cells, platelet aggregation, cytoskeleton reorganization and engulfment. Functions in the retinal pigment epithelium (RPE) as a regulator of rod outer segments fragments phagocytosis. Also plays an important role in inhibition of Toll-like receptors (TLRs)-mediated innate immune response by activating STAT1, which selectively induces production of suppressors of cytokine signaling SOCS1 and SOCS3. The polypeptide is Tyrosine-protein kinase Mer (MERTK) (Homo sapiens (Human)).